A 378-amino-acid chain; its full sequence is Chaperone protein DnaJ (378 aa).

Positions 5 to 70 constitute a J domain; sequence DYYETLGVSQ…QKRAAYDQYG (66 aa). The CR-type zinc finger occupies 134–212; it reads GKSLEIKVPT…CRGQGRVEKT (79 aa). Residues Cys-147, Cys-150, Cys-164, Cys-167, Cys-186, Cys-189, Cys-200, and Cys-203 each coordinate Zn(2+). CXXCXGXG motif repeat units follow at residues 147-154, 164-171, 186-193, and 200-207; these read CEPCDGSG, CSTCHGHG, CPTCSGKG, and CTSCRGQG.

This sequence belongs to the DnaJ family. As to quaternary structure, homodimer. The cofactor is Zn(2+).

The protein localises to the cytoplasm. Functionally, participates actively in the response to hyperosmotic and heat shock by preventing the aggregation of stress-denatured proteins and by disaggregating proteins, also in an autonomous, DnaK-independent fashion. Unfolded proteins bind initially to DnaJ; upon interaction with the DnaJ-bound protein, DnaK hydrolyzes its bound ATP, resulting in the formation of a stable complex. GrpE releases ADP from DnaK; ATP binding to DnaK triggers the release of the substrate protein, thus completing the reaction cycle. Several rounds of ATP-dependent interactions between DnaJ, DnaK and GrpE are required for fully efficient folding. Also involved, together with DnaK and GrpE, in the DNA replication of plasmids through activation of initiation proteins. This Colwellia psychrerythraea (strain 34H / ATCC BAA-681) (Vibrio psychroerythus) protein is Chaperone protein DnaJ.